A 541-amino-acid chain; its full sequence is Phenazine N-monooxygenase PhzNO1 (541 aa).

FAD is bound by residues Asp39, 47–50 (TWYW), 59–60 (DT), Tyr65, and Ile112. An NADP(+)-binding site is contributed by 57–59 (RAD). NADP(+) is bound by residues 186–192 (TGSTGVQ), 209–210 (RS), and Trp492.

It belongs to the FAD-binding monooxygenase family. FAD serves as cofactor.

It catalyses the reaction 1,6-dihydroxyphenazine + NADPH + O2 = 1,6-dihydroxyphenazine N(5)-oxide + NADP(+) + H2O. The enzyme catalyses 1,6-dihydroxyphenazine N(5)-oxide + NADPH + O2 = 1,6-dihydroxyphenazine N(5),N(10)-dioxide + NADP(+) + H2O. It carries out the reaction 1-hydroxy-6-methoxyphenazine + NADPH + O2 = 1-hydroxy-6-methoxyphenazine N(10)-oxide + NADP(+) + H2O. The catalysed reaction is quinolin-8-ol + NADPH + O2 = 8-hydroxyquinoline N-oxide + NADP(+) + H2O. In terms of biological role, involved in the biosynthesis of phenazine natural products including myxin, an N(5),N(10)-dioxide phenazine antiobiotic, which has antimicrobial activity. Catalyzes the aromatic N-oxidations of phenazines, such as 1,6-dihydroxyphenazine (DHP), 1,6-dihydroxyphenazine N(5)-oxide (DHPO) and 1-hydroxy-6-methoxyphenazine to produce DHPO, iodinin (1,6-dihydroxyphenazine N(5),N(10)-dioxide) and 1-hydroxy-6-methoxyphenazine N(10)-oxide, respectively. Also catalyzes the N-oxidation of 8-hydroxyquinoline, but not 6-hydroxyquinoline (6-HQ), quinoline, quinoxaline, quinine and 2-phenylpyridine. The protein is Phenazine N-monooxygenase PhzNO1 of Lysobacter antibioticus.